The primary structure comprises 434 residues: Glutamate-1-semialdehyde 2,1-aminomutase 2 (434 aa).

N6-(pyridoxal phosphate)lysine is present on lysine 270.

The protein belongs to the class-III pyridoxal-phosphate-dependent aminotransferase family. HemL subfamily. As to quaternary structure, homodimer. It depends on pyridoxal 5'-phosphate as a cofactor.

The protein resides in the cytoplasm. The catalysed reaction is (S)-4-amino-5-oxopentanoate = 5-aminolevulinate. It functions in the pathway porphyrin-containing compound metabolism; protoporphyrin-IX biosynthesis; 5-aminolevulinate from L-glutamyl-tRNA(Glu): step 2/2. The polypeptide is Glutamate-1-semialdehyde 2,1-aminomutase 2 (Bacillus cereus (strain G9842)).